The sequence spans 619 residues: Dihydroxy-acid dehydratase (619 aa).

D81 is a binding site for Mg(2+). C122 contacts [2Fe-2S] cluster. Positions 123 and 124 each coordinate Mg(2+). K124 carries the N6-carboxylysine modification. C198 contributes to the [2Fe-2S] cluster binding site. E494 lines the Mg(2+) pocket. S520 (proton acceptor) is an active-site residue.

Belongs to the IlvD/Edd family. Homodimer. [2Fe-2S] cluster is required as a cofactor. It depends on Mg(2+) as a cofactor.

The enzyme catalyses (2R)-2,3-dihydroxy-3-methylbutanoate = 3-methyl-2-oxobutanoate + H2O. The catalysed reaction is (2R,3R)-2,3-dihydroxy-3-methylpentanoate = (S)-3-methyl-2-oxopentanoate + H2O. Its pathway is amino-acid biosynthesis; L-isoleucine biosynthesis; L-isoleucine from 2-oxobutanoate: step 3/4. It functions in the pathway amino-acid biosynthesis; L-valine biosynthesis; L-valine from pyruvate: step 3/4. Functionally, functions in the biosynthesis of branched-chain amino acids. Catalyzes the dehydration of (2R,3R)-2,3-dihydroxy-3-methylpentanoate (2,3-dihydroxy-3-methylvalerate) into 2-oxo-3-methylpentanoate (2-oxo-3-methylvalerate) and of (2R)-2,3-dihydroxy-3-methylbutanoate (2,3-dihydroxyisovalerate) into 2-oxo-3-methylbutanoate (2-oxoisovalerate), the penultimate precursor to L-isoleucine and L-valine, respectively. This is Dihydroxy-acid dehydratase from Neisseria meningitidis serogroup A / serotype 4A (strain DSM 15465 / Z2491).